We begin with the raw amino-acid sequence, 133 residues long: ATP synthase epsilon chain (133 aa).

Belongs to the ATPase epsilon chain family. F-type ATPases have 2 components, CF(1) - the catalytic core - and CF(0) - the membrane proton channel. CF(1) has five subunits: alpha(3), beta(3), gamma(1), delta(1), epsilon(1). CF(0) has three main subunits: a, b and c.

Its subcellular location is the cell membrane. In terms of biological role, produces ATP from ADP in the presence of a proton gradient across the membrane. This is ATP synthase epsilon chain (atpC) from Alkalihalophilus pseudofirmus (strain ATCC BAA-2126 / JCM 17055 / OF4) (Bacillus pseudofirmus).